The sequence spans 282 residues: Large ribosomal subunit protein uL4c (282 aa).

A chloroplast-targeting transit peptide spans 1–49 (MASSATAPNSLSFFSSSLFLSSSHQIPKTYISVSKLGSGRVSKPLSVSS). Residues 106-138 (EVRGGGIKPYSQKKTGHARRGSQRTPLRPGGGV) are disordered.

Belongs to the universal ribosomal protein uL4 family. In terms of assembly, part of the 50S ribosomal subunit.

It is found in the plastid. It localises to the chloroplast. This protein binds directly and specifically to 23S rRNA. May play a role in plastid transcriptional regulation. This chain is Large ribosomal subunit protein uL4c (RPL4), found in Arabidopsis thaliana (Mouse-ear cress).